A 401-amino-acid chain; its full sequence is Probable tRNA sulfurtransferase (401 aa).

The region spanning 60 to 165 (EPIIDKLKTV…QDGTYVTCHD (106 aa)) is the THUMP domain. Residues 183-184 (ML), 208-209 (HF), Arg265, Gly287, and Gln296 each bind ATP.

It belongs to the ThiI family.

The protein localises to the cytoplasm. The catalysed reaction is [ThiI sulfur-carrier protein]-S-sulfanyl-L-cysteine + a uridine in tRNA + 2 reduced [2Fe-2S]-[ferredoxin] + ATP + H(+) = [ThiI sulfur-carrier protein]-L-cysteine + a 4-thiouridine in tRNA + 2 oxidized [2Fe-2S]-[ferredoxin] + AMP + diphosphate. It catalyses the reaction [ThiS sulfur-carrier protein]-C-terminal Gly-Gly-AMP + S-sulfanyl-L-cysteinyl-[cysteine desulfurase] + AH2 = [ThiS sulfur-carrier protein]-C-terminal-Gly-aminoethanethioate + L-cysteinyl-[cysteine desulfurase] + A + AMP + 2 H(+). The protein operates within cofactor biosynthesis; thiamine diphosphate biosynthesis. In terms of biological role, catalyzes the ATP-dependent transfer of a sulfur to tRNA to produce 4-thiouridine in position 8 of tRNAs, which functions as a near-UV photosensor. Also catalyzes the transfer of sulfur to the sulfur carrier protein ThiS, forming ThiS-thiocarboxylate. This is a step in the synthesis of thiazole, in the thiamine biosynthesis pathway. The sulfur is donated as persulfide by IscS. The polypeptide is Probable tRNA sulfurtransferase (Geobacillus thermodenitrificans (strain NG80-2)).